The primary structure comprises 487 residues: N-succinylglutamate 5-semialdehyde dehydrogenase (487 aa).

Position 221 to 226 (glycine 221 to glycine 226) interacts with NAD(+). Catalysis depends on residues glutamate 244 and cysteine 278.

The protein belongs to the aldehyde dehydrogenase family. AstD subfamily.

The catalysed reaction is N-succinyl-L-glutamate 5-semialdehyde + NAD(+) + H2O = N-succinyl-L-glutamate + NADH + 2 H(+). It functions in the pathway amino-acid degradation; L-arginine degradation via AST pathway; L-glutamate and succinate from L-arginine: step 4/5. Functionally, catalyzes the NAD-dependent reduction of succinylglutamate semialdehyde into succinylglutamate. The protein is N-succinylglutamate 5-semialdehyde dehydrogenase of Burkholderia cenocepacia (strain HI2424).